The chain runs to 235 residues: Ribonuclease PH (235 aa).

Phosphate-binding positions include R86 and 124 to 126 (GTR).

Belongs to the RNase PH family. As to quaternary structure, homohexameric ring arranged as a trimer of dimers.

It catalyses the reaction tRNA(n+1) + phosphate = tRNA(n) + a ribonucleoside 5'-diphosphate. Phosphorolytic 3'-5' exoribonuclease that plays an important role in tRNA 3'-end maturation. Removes nucleotide residues following the 3'-CCA terminus of tRNAs; can also add nucleotides to the ends of RNA molecules by using nucleoside diphosphates as substrates, but this may not be physiologically important. Probably plays a role in initiation of 16S rRNA degradation (leading to ribosome degradation) during starvation. The sequence is that of Ribonuclease PH from Legionella pneumophila (strain Paris).